A 244-amino-acid polypeptide reads, in one-letter code: Phosphoadenosine 5'-phosphosulfate reductase (244 aa).

Cysteine 239 acts as the Nucleophile; cysteine thiosulfonate intermediate in catalysis.

It belongs to the PAPS reductase family. CysH subfamily.

Its subcellular location is the cytoplasm. It carries out the reaction [thioredoxin]-disulfide + sulfite + adenosine 3',5'-bisphosphate + 2 H(+) = [thioredoxin]-dithiol + 3'-phosphoadenylyl sulfate. Its pathway is sulfur metabolism; hydrogen sulfide biosynthesis; sulfite from sulfate: step 3/3. Its function is as follows. Catalyzes the formation of sulfite from phosphoadenosine 5'-phosphosulfate (PAPS) using thioredoxin as an electron donor. This chain is Phosphoadenosine 5'-phosphosulfate reductase, found in Citrobacter koseri (strain ATCC BAA-895 / CDC 4225-83 / SGSC4696).